Consider the following 161-residue polypeptide: 18.3 kDa class I heat shock protein (161 aa).

Positions 48–161 (ETAAFANARI…KPQVKAINVY (114 aa)) constitute a sHSP domain.

It belongs to the small heat shock protein (HSP20) family. In terms of assembly, forms oligomeric structures.

Its subcellular location is the cytoplasm. In Oxybasis rubra (Red goosefoot), this protein is 18.3 kDa class I heat shock protein (HSP18).